The primary structure comprises 220 residues: Charged multivesicular body protein 2a (220 aa).

Coiled-coil stretches lie at residues 12 to 53 (EEML…MAKQ) and 199 to 220 (PSAA…LRRD). The disordered stretch occupies residues 179 to 208 (LSNLPSTGGSLSVAGAKKGEPSAALADADA). The MIT-interacting motif signature appears at 208 to 218 (ADLEERLNNLR).

This sequence belongs to the SNF7 family. As to quaternary structure, probable core component of the endosomal sorting required for transport complex III (ESCRT-III). ESCRT-III components are thought to multimerize to form a flat lattice on the perimeter membrane of the endosome.

Its subcellular location is the late endosome membrane. It is found in the cytoplasm. Probable core component of the endosomal sorting required for transport complex III (ESCRT-III) which is involved in multivesicular bodies (MVBs) formation and sorting of endosomal cargo proteins into MVBs. MVBs contain intraluminal vesicles (ILVs) that are generated by invagination and scission from the limiting membrane of the endosome and mostly are delivered to lysosomes enabling degradation of membrane proteins, such as stimulated growth factor receptors, lysosomal enzymes and lipids. In Xenopus tropicalis (Western clawed frog), this protein is Charged multivesicular body protein 2a (chmp2a).